A 251-amino-acid chain; its full sequence is L-xylulose reductase (251 aa).

Leu13–Asn42 is a binding site for NADP(+). Residue Ser143 participates in substrate binding. Tyr156 serves as the catalytic Proton acceptor. Lys160 lines the NADP(+) pocket.

This sequence belongs to the short-chain dehydrogenases/reductases (SDR) family. As to quaternary structure, homotetramer. As to expression, expressed in intestine, gonad and spermatids (at protein level). Expressed in intestine, uterine seam, gonadal sheath cells, spermathecal-uterus valve and spermatids.

It localises to the cell membrane. It catalyses the reaction xylitol + NADP(+) = L-xylulose + NADPH + H(+). Strongly inhibited by 10% dimethyl sulfoxide. Its function is as follows. Catalyzes the NADPH-dependent reduction of L-xylulose, D-xylulose, L-(+) erythrulose, D-erythrose, D-threose, L-ribulose, 1,4-dibromo-2,3-butanedione and 2,3-heptanedione. Also active against isatin, 9,10-phenanthrenequinone, menadione, 2,3-hexaenadione and 3,4-hexahenadione. No activity observed when tested using NADH rather than NADPH. The chain is L-xylulose reductase from Caenorhabditis elegans.